The following is a 514-amino-acid chain: Light-independent protochlorophyllide reductase subunit B (514 aa).

D36 contributes to the [4Fe-4S] cluster binding site. D300 serves as the catalytic Proton donor. A substrate-binding site is contributed by 435–436 (GM).

Belongs to the ChlB/BchB/BchZ family. In terms of assembly, protochlorophyllide reductase is composed of three subunits; ChlL, ChlN and ChlB. Forms a heterotetramer of two ChlB and two ChlN subunits. [4Fe-4S] cluster serves as cofactor.

It localises to the plastid. Its subcellular location is the chloroplast. The enzyme catalyses chlorophyllide a + oxidized 2[4Fe-4S]-[ferredoxin] + 2 ADP + 2 phosphate = protochlorophyllide a + reduced 2[4Fe-4S]-[ferredoxin] + 2 ATP + 2 H2O. It participates in porphyrin-containing compound metabolism; chlorophyll biosynthesis (light-independent). In terms of biological role, component of the dark-operative protochlorophyllide reductase (DPOR) that uses Mg-ATP and reduced ferredoxin to reduce ring D of protochlorophyllide (Pchlide) to form chlorophyllide a (Chlide). This reaction is light-independent. The NB-protein (ChlN-ChlB) is the catalytic component of the complex. The polypeptide is Light-independent protochlorophyllide reductase subunit B (Pleurastrum terricola (Filamentous green alga)).